The primary structure comprises 92 residues: Phospholemman (92 aa).

An N-terminal signal peptide occupies residues 1 to 20 (MASPGHILIVCVCLLSMASA). Residues 21–35 (EAPQEPDPFTYDYHT) lie on the Extracellular side of the membrane. Residues 36–56 (LRIGGLTIAGILFILGILIIL) traverse the membrane as a helical segment. Over 57 to 92 (SKRCRCKFNQQQRTGEPDEEEGTFRSSIRRLSTRRR) the chain is Cytoplasmic. Cys60 carries the S-palmitoyl cysteine lipid modification. Residue Cys62 is modified to S-glutathionyl cysteine; alternate. Residue Cys62 is the site of S-palmitoyl cysteine; alternate attachment. Positions 66–92 (QQQRTGEPDEEEGTFRSSIRRLSTRRR) are disordered. The residue at position 79 (Thr79) is a Phosphothreonine. The residue at position 82 (Ser82) is a Phosphoserine. Ser83 is modified (phosphoserine; by PKA and PKC). The span at 83-92 (SIRRLSTRRR) shows a compositional bias: basic residues. Phosphoserine; by PKA is present on Ser88. A Phosphothreonine; by PKC modification is found at Thr89.

It belongs to the FXYD family. Homotetramer. Monomer. Regulatory subunit of the sodium/potassium-transporting ATPase (NKA) which is composed of a catalytic alpha subunit, a non-catalytic beta subunit and an additional regulatory subunit. The monomeric form associates with NKA while the oligomeric form does not. Interacts with the catalytic alpha-1 subunit ATP1A1. Also interacts with the catalytic alpha-2 and alpha-3 subunits ATP1A2 and ATP1A3. Very little interaction with ATP1A1, ATP1A2 or ATP1A3 when phosphorylated at Ser-83. Interacts with the non-catalytic beta-1 subunit ATP1B1. Oxidative stress decreases interaction with ATP1A1 but increases interaction with ATP1B1. Major plasma membrane substrate for cAMP-dependent protein kinase (PKA) and protein kinase C (PKC) in several different tissues. Phosphorylated in response to insulin and adrenergic stimulation. Phosphorylation at Ser-88 stimulates sodium/potassium-transporting ATPase activity while the unphosphorylated form inhibits sodium/potassium-transporting ATPase activity. Phosphorylation increases tetramerization, decreases binding to ATP1A1 and reduces inhibition of ATP1A1 activity. Phosphorylation at Ser-83 leads to greatly reduced interaction with ATP1A1, ATP1A2 and ATP1A3. May be phosphorylated by DMPK. In terms of processing, palmitoylation increases half-life and stability and is enhanced upon phosphorylation at Ser-88 by PKA. As to expression, in adult brain, highest levels are found in the cerebellum and in the lateral, third and fourth ventricles of the choroid plexus (at protein level). Also detected in cells of a portion of the ependymal lining of the lateral ventricle on its rostral surface posterior to the caudate putamen (at protein level). Expressed in a subset of neurons which secrete gonadotropin-releasing hormone.

It localises to the cell membrane. It is found in the sarcolemma. The protein localises to the apical cell membrane. The protein resides in the membrane. Its subcellular location is the caveola. It localises to the T-tubule. Associates with and regulates the activity of the sodium/potassium-transporting ATPase (NKA) which transports Na(+) out of the cell and K(+) into the cell. Inhibits NKA activity in its unphosphorylated state and stimulates activity when phosphorylated. Reduces glutathionylation of the NKA beta-1 subunit ATP1B1, thus reversing glutathionylation-mediated inhibition of ATP1B1. Contributes to female sexual development by maintaining the excitability of neurons which secrete gonadotropin-releasing hormone. This chain is Phospholemman, found in Rattus norvegicus (Rat).